Consider the following 398-residue polypeptide: Lysophospholipid acyltransferase LPEAT1 (398 aa).

Positions 1–24 (MESELKDLNSNSNPPSSKEDRPLL) are disordered. Ser-28 bears the Phosphoserine mark. A helical transmembrane segment spans residues 66–86 (LAVALVTLVPLRFLLSMSILL). The disordered stretch occupies residues 158–185 (RDSDMDSNPKTTSTEINQKGEAATEEPE). Polar residues predominate over residues 163-174 (DSNPKTTSTEIN). The short motif at 194 to 199 (HVSYLD) is the HXXXXD motif element.

The protein belongs to the 1-acyl-sn-glycerol-3-phosphate acyltransferase family.

Its subcellular location is the endoplasmic reticulum membrane. The catalysed reaction is a 1-acyl-sn-glycero-3-phosphoethanolamine + an acyl-CoA = a 1,2-diacyl-sn-glycero-3-phosphoethanolamine + CoA. The enzyme catalyses a 1-acyl-sn-glycero-3-phosphate + an acyl-CoA = a 1,2-diacyl-sn-glycero-3-phosphate + CoA. It carries out the reaction a 1-acyl-sn-glycero-3-phosphocholine + an acyl-CoA = a 1,2-diacyl-sn-glycero-3-phosphocholine + CoA. It catalyses the reaction a 1-acyl-sn-glycero-3-phospho-L-serine + an acyl-CoA = a 1,2-diacyl-sn-glycero-3-phospho-L-serine + CoA. It functions in the pathway lipid metabolism; phospholipid metabolism. In terms of biological role, possesses acyl-CoA-dependent lysophospholipid acyltransferase activity with a subset of lysophospholipids as substrates. Exhibits strong acylation activity on lysophosphatidylethanolamine (LPE) and lysophosphatidate (LPA), and lower activity on lysophosphatidylcholine (LPC) and lysophosphatidylserine (LPS). Exhibits acylation activity on both LPE and LPC. Has a preference for 18:1-LPE over 16:0-LPE as acceptor. Palmitoyl-CoA (16:0-CoA) is a better acyl donor than oleoyl-CoA (18:1-CoA). Among several different acyl-CoA species the best acyl donor is palmitoyl-CoA (16:0-CoA). Activity is calcium-independent. Its activity is essential for maintaining adequate levels of phosphatidylethanolamine (PE), LPE and LPC in the cells, which is crucial for plant growth regulation. The polypeptide is Lysophospholipid acyltransferase LPEAT1 (Arabidopsis thaliana (Mouse-ear cress)).